Here is a 326-residue protein sequence, read N- to C-terminus: Holliday junction branch migration complex subunit RuvB (326 aa).

Positions Met1–Tyr180 are large ATPase domain (RuvB-L). Residues Ile19, Arg20, Gly61, Lys64, Thr65, Thr66, Glu127 to Phe129, Arg170, Tyr180, and Arg217 contribute to the ATP site. Thr65 is a Mg(2+) binding site. A small ATPAse domain (RuvB-S) region spans residues Ser181–Gly251. The tract at residues Lys254–Tyr326 is head domain (RuvB-H). Arg307 and Arg312 together coordinate DNA.

It belongs to the RuvB family. In terms of assembly, homohexamer. Forms an RuvA(8)-RuvB(12)-Holliday junction (HJ) complex. HJ DNA is sandwiched between 2 RuvA tetramers; dsDNA enters through RuvA and exits via RuvB. An RuvB hexamer assembles on each DNA strand where it exits the tetramer. Each RuvB hexamer is contacted by two RuvA subunits (via domain III) on 2 adjacent RuvB subunits; this complex drives branch migration. In the full resolvosome a probable DNA-RuvA(4)-RuvB(12)-RuvC(2) complex forms which resolves the HJ.

Its subcellular location is the cytoplasm. It catalyses the reaction ATP + H2O = ADP + phosphate + H(+). Its function is as follows. The RuvA-RuvB-RuvC complex processes Holliday junction (HJ) DNA during genetic recombination and DNA repair, while the RuvA-RuvB complex plays an important role in the rescue of blocked DNA replication forks via replication fork reversal (RFR). RuvA specifically binds to HJ cruciform DNA, conferring on it an open structure. The RuvB hexamer acts as an ATP-dependent pump, pulling dsDNA into and through the RuvAB complex. RuvB forms 2 homohexamers on either side of HJ DNA bound by 1 or 2 RuvA tetramers; 4 subunits per hexamer contact DNA at a time. Coordinated motions by a converter formed by DNA-disengaged RuvB subunits stimulates ATP hydrolysis and nucleotide exchange. Immobilization of the converter enables RuvB to convert the ATP-contained energy into a lever motion, pulling 2 nucleotides of DNA out of the RuvA tetramer per ATP hydrolyzed, thus driving DNA branch migration. The RuvB motors rotate together with the DNA substrate, which together with the progressing nucleotide cycle form the mechanistic basis for DNA recombination by continuous HJ branch migration. Branch migration allows RuvC to scan DNA until it finds its consensus sequence, where it cleaves and resolves cruciform DNA. The sequence is that of Holliday junction branch migration complex subunit RuvB from Wolbachia sp. subsp. Brugia malayi (strain TRS).